The chain runs to 146 residues: Large ribosomal subunit protein uL15 (146 aa).

The tract at residues 1–42 (MTIKLHDLQPARGSKTTRTRVGRGEASKGKTAGRGTKGTKAR) is disordered.

Belongs to the universal ribosomal protein uL15 family. In terms of assembly, part of the 50S ribosomal subunit.

Its function is as follows. Binds to the 23S rRNA. In Mycobacterium leprae (strain Br4923), this protein is Large ribosomal subunit protein uL15.